Here is a 372-residue protein sequence, read N- to C-terminus: Transaldolase (372 aa).

The Schiff-base intermediate with substrate role is filled by Lys140.

It belongs to the transaldolase family. Type 2 subfamily.

It is found in the cytoplasm. The enzyme catalyses D-sedoheptulose 7-phosphate + D-glyceraldehyde 3-phosphate = D-erythrose 4-phosphate + beta-D-fructose 6-phosphate. It functions in the pathway carbohydrate degradation; pentose phosphate pathway; D-glyceraldehyde 3-phosphate and beta-D-fructose 6-phosphate from D-ribose 5-phosphate and D-xylulose 5-phosphate (non-oxidative stage): step 2/3. Its function is as follows. Transaldolase is important for the balance of metabolites in the pentose-phosphate pathway. This Acidothermus cellulolyticus (strain ATCC 43068 / DSM 8971 / 11B) protein is Transaldolase.